Consider the following 130-residue polypeptide: S-adenosylmethionine decarboxylase proenzyme (130 aa).

The Schiff-base intermediate with substrate; via pyruvic acid role is filled by Ser66. Ser66 is subject to Pyruvic acid (Ser); by autocatalysis. His71 functions as the Proton acceptor; for processing activity in the catalytic mechanism. Cys86 acts as the Proton donor; for catalytic activity in catalysis.

It belongs to the prokaryotic AdoMetDC family. Type 1 subfamily. Heterotetramer of two alpha and two beta chains arranged as a dimer of alpha/beta heterodimers. The cofactor is pyruvate. Post-translationally, is synthesized initially as an inactive proenzyme. Formation of the active enzyme involves a self-maturation process in which the active site pyruvoyl group is generated from an internal serine residue via an autocatalytic post-translational modification. Two non-identical subunits are generated from the proenzyme in this reaction, and the pyruvate is formed at the N-terminus of the alpha chain, which is derived from the carboxyl end of the proenzyme. The post-translation cleavage follows an unusual pathway, termed non-hydrolytic serinolysis, in which the side chain hydroxyl group of the serine supplies its oxygen atom to form the C-terminus of the beta chain, while the remainder of the serine residue undergoes an oxidative deamination to produce ammonia and the pyruvoyl group blocking the N-terminus of the alpha chain.

It carries out the reaction S-adenosyl-L-methionine + H(+) = S-adenosyl 3-(methylsulfanyl)propylamine + CO2. Its pathway is amine and polyamine biosynthesis; S-adenosylmethioninamine biosynthesis; S-adenosylmethioninamine from S-adenosyl-L-methionine: step 1/1. Its function is as follows. Catalyzes the decarboxylation of S-adenosylmethionine to S-adenosylmethioninamine (dcAdoMet), the propylamine donor required for the synthesis of the polyamines spermine and spermidine from the diamine putrescine. In Bacillus cytotoxicus (strain DSM 22905 / CIP 110041 / 391-98 / NVH 391-98), this protein is S-adenosylmethionine decarboxylase proenzyme.